We begin with the raw amino-acid sequence, 266 residues long: Ribosomal RNA small subunit methyltransferase A (266 aa).

Residues asparagine 16, leucine 18, glycine 43, glutamate 64, aspartate 89, and asparagine 110 each contribute to the S-adenosyl-L-methionine site.

It belongs to the class I-like SAM-binding methyltransferase superfamily. rRNA adenine N(6)-methyltransferase family. RsmA subfamily.

It is found in the cytoplasm. The enzyme catalyses adenosine(1518)/adenosine(1519) in 16S rRNA + 4 S-adenosyl-L-methionine = N(6)-dimethyladenosine(1518)/N(6)-dimethyladenosine(1519) in 16S rRNA + 4 S-adenosyl-L-homocysteine + 4 H(+). In terms of biological role, specifically dimethylates two adjacent adenosines (A1518 and A1519) in the loop of a conserved hairpin near the 3'-end of 16S rRNA in the 30S particle. May play a critical role in biogenesis of 30S subunits. The protein is Ribosomal RNA small subunit methyltransferase A of Marinomonas sp. (strain MWYL1).